The chain runs to 338 residues: Glutamyl-tRNA reductase (338 aa).

Residues 50–53 (TCHR), Ser-102, 107–109 (ETE), and Gln-113 contribute to the substrate site. Cys-51 serves as the catalytic Nucleophile. Residue 181 to 186 (GYSEIN) coordinates NADP(+).

The protein belongs to the glutamyl-tRNA reductase family. As to quaternary structure, homodimer.

It catalyses the reaction (S)-4-amino-5-oxopentanoate + tRNA(Glu) + NADP(+) = L-glutamyl-tRNA(Glu) + NADPH + H(+). The protein operates within porphyrin-containing compound metabolism; protoporphyrin-IX biosynthesis; 5-aminolevulinate from L-glutamyl-tRNA(Glu): step 1/2. Functionally, catalyzes the NADPH-dependent reduction of glutamyl-tRNA(Glu) to glutamate 1-semialdehyde (GSA). The chain is Glutamyl-tRNA reductase from Chlamydia abortus (strain DSM 27085 / S26/3) (Chlamydophila abortus).